The following is a 316-amino-acid chain: Glutathione synthetase (316 aa).

Residues 124 to 310 (EKLFTAWFPE…ITGKLMDAIE (187 aa)) form the ATP-grasp domain. 150-207 (FREEHGDVILKPLDGMGGASIFRVKENDPNVSVIIETLTNHGQNYAMAQTFVPDISNG) is an ATP binding site. Mg(2+) is bound by residues Glu281 and Asn283.

The protein belongs to the prokaryotic GSH synthase family. Mg(2+) serves as cofactor. Mn(2+) is required as a cofactor.

The enzyme catalyses gamma-L-glutamyl-L-cysteine + glycine + ATP = glutathione + ADP + phosphate + H(+). It functions in the pathway sulfur metabolism; glutathione biosynthesis; glutathione from L-cysteine and L-glutamate: step 2/2. The protein is Glutathione synthetase of Vibrio parahaemolyticus serotype O3:K6 (strain RIMD 2210633).